The primary structure comprises 529 residues: Peptide chain release factor 3 (529 aa).

In terms of domain architecture, tr-type G spans 11-280 (AARRTFAIIS…GLVAWAPPPM (270 aa)). GTP contacts are provided by residues 20–27 (SHPDAGKT), 88–92 (DTPGH), and 142–145 (NKVD).

Belongs to the TRAFAC class translation factor GTPase superfamily. Classic translation factor GTPase family. PrfC subfamily.

The protein localises to the cytoplasm. In terms of biological role, increases the formation of ribosomal termination complexes and stimulates activities of RF-1 and RF-2. It binds guanine nucleotides and has strong preference for UGA stop codons. It may interact directly with the ribosome. The stimulation of RF-1 and RF-2 is significantly reduced by GTP and GDP, but not by GMP. The polypeptide is Peptide chain release factor 3 (Sodalis glossinidius (strain morsitans)).